Consider the following 233-residue polypeptide: Demethylmenaquinone methyltransferase (233 aa).

Residues threonine 58, aspartate 79, and 106–107 (NA) each bind S-adenosyl-L-methionine.

The protein belongs to the class I-like SAM-binding methyltransferase superfamily. MenG/UbiE family.

It carries out the reaction a 2-demethylmenaquinol + S-adenosyl-L-methionine = a menaquinol + S-adenosyl-L-homocysteine + H(+). Its pathway is quinol/quinone metabolism; menaquinone biosynthesis; menaquinol from 1,4-dihydroxy-2-naphthoate: step 2/2. In terms of biological role, methyltransferase required for the conversion of demethylmenaquinol (DMKH2) to menaquinol (MKH2). The polypeptide is Demethylmenaquinone methyltransferase (Bacillus subtilis (strain 168)).